Consider the following 655-residue polypeptide: Protein npp-24 (655 aa).

Residues 263–283 (ICSVFVLVSGGGVLSHLVVFP) form a helical membrane-spanning segment.

It is found in the membrane. This is Protein npp-24 from Caenorhabditis elegans.